A 197-amino-acid chain; its full sequence is Beta-crystallin A2 (197 aa).

The interval 1-11 (MSSAPAQGPAP) is N-terminal arm. Beta/gamma crystallin 'Greek key' domains are found at residues 12–52 (ASLT…KVEN) and 53–99 (GAWV…RPVL). A connecting peptide region spans residues 100-105 (CANHSD). Beta/gamma crystallin 'Greek key' domains follow at residues 106–147 (SRVT…KVSS) and 148–196 (GAWV…RRVQ).

It belongs to the beta/gamma-crystallin family. In terms of assembly, homo/heterodimer, or complexes of higher-order. The structure of beta-crystallin oligomers seems to be stabilized through interactions between the N-terminal arms.

Functionally, crystallins are the dominant structural components of the vertebrate eye lens. The sequence is that of Beta-crystallin A2 (CRYBA2) from Bos taurus (Bovine).